Here is a 950-residue protein sequence, read N- to C-terminus: Glycine dehydrogenase (decarboxylating) (950 aa).

Lysine 698 carries the post-translational modification N6-(pyridoxal phosphate)lysine.

Belongs to the GcvP family. In terms of assembly, the glycine cleavage system is composed of four proteins: P, T, L and H. Requires pyridoxal 5'-phosphate as cofactor.

The enzyme catalyses N(6)-[(R)-lipoyl]-L-lysyl-[glycine-cleavage complex H protein] + glycine + H(+) = N(6)-[(R)-S(8)-aminomethyldihydrolipoyl]-L-lysyl-[glycine-cleavage complex H protein] + CO2. Its function is as follows. The glycine cleavage system catalyzes the degradation of glycine. The P protein binds the alpha-amino group of glycine through its pyridoxal phosphate cofactor; CO(2) is released and the remaining methylamine moiety is then transferred to the lipoamide cofactor of the H protein. The sequence is that of Glycine dehydrogenase (decarboxylating) from Neisseria meningitidis serogroup A / serotype 4A (strain DSM 15465 / Z2491).